A 269-amino-acid chain; its full sequence is MIRTLLLSTLVAGALSCGDPTYPPYVTRVVGGEEARPNSWPWQVSLQYSSNGKWYHTCGGSLIANSWVLTAAHCISSSRTYRVGLGRHNLYVAESGSLAVSVSKIVVHKDWNSNQISKGNDIALLKLANPVSLTDKIQLACLPPAGTILPNNYPCYVTGWGRLQTNGAVPDVLQQGRLLVVDYATCSSSAWWGSSVKTSMICAGGDGVISSCNGDSGGPLNCQASDGRWQVHGIVSFGSRLGCNYYHKPSVFTRVSNYIDWINSVIANN.

An N-terminal signal peptide occupies residues 1-16 (MIRTLLLSTLVAGALS). A propeptide spans 17–28 (CGDPTYPPYVTR) (activation peptide). In terms of domain architecture, Peptidase S1 spans 29 to 267 (VVGGEEARPN…YIDWINSVIA (239 aa)). Cys58 and Cys74 are joined by a disulfide. Active-site charge relay system residues include His73 and Asp121. 3 disulfides stabilise this stretch: Cys155/Cys222, Cys186/Cys202, and Cys212/Cys243. Ser216 acts as the Charge relay system in catalysis.

Belongs to the peptidase S1 family. Elastase subfamily. Interacts with CPA1. Interacts with SERPINA1. In terms of tissue distribution, expressed in pancreas. Not detected in keratinocytes. Detected in exocrine secretions of the pancreas (at protein level). Also expressed in a small fraction of cells in pancreatic islets, adrenal cortex, intestinal glands and colonic lymphoid follicles (at protein level). Detected in plasma.

It is found in the secreted. The catalysed reaction is Preferential cleavage: Leu-|-Xaa, Met-|-Xaa and Phe-|-Xaa. Hydrolyzes elastin.. Its function is as follows. Elastase that enhances insulin signaling and might have a physiologic role in cellular glucose metabolism. Circulates in plasma and reduces platelet hyperactivation, triggers both insulin secretion and degradation, and increases insulin sensitivity. The polypeptide is Chymotrypsin-like elastase family member 2A (Homo sapiens (Human)).